The chain runs to 80 residues: Cytochrome c oxidase subunit 7A1, mitochondrial (80 aa).

A mitochondrion-targeting transit peptide spans 1–21 (MRALRVSQALVRSFSSSTRSH). The Mitochondrial matrix segment spans residues 22–46 (LENRVAEKQKLFQADNDLPVHLKGG). The helical transmembrane segment at 47–75 (GMDNVLYRLTMTLTLGGTAYCLYCLGWAS) threads the bilayer. The Mitochondrial intermembrane portion of the chain corresponds to 76–80 (FPHKK).

Belongs to the cytochrome c oxidase VIIa family. Component of the complex IV (CIV, cytochrome c oxidase), a multisubunit enzyme composed of 14 subunits. The complex is composed of a catalytic core of 3 subunits MT-CO1, MT-CO2 and MT-CO3, encoded in the mitochondrial DNA, and 11 supernumerary subunits COX4I, COX5A, COX5B, COX6A, COX6B, COX6C, COX7A, COX7B, COX7C, COX8 and NDUFA4, which are encoded in the nuclear genome. The complex exists as a monomer or a dimer and forms supercomplexes (SCs) in the inner mitochondrial membrane with NADH-ubiquinone oxidoreductase (complex I, CI) and ubiquinol-cytochrome c oxidoreductase (cytochrome b-c1 complex, complex III, CIII), resulting in different assemblies (supercomplex SCI(1)III(2)IV(1) and megacomplex MCI(2)III(2)IV(2)).

It localises to the mitochondrion inner membrane. It functions in the pathway energy metabolism; oxidative phosphorylation. In terms of biological role, component of the mitochondrial respiratory complex IV (CIV, also named cytochrome c oxidase complex), the last enzyme in the mitochondrial electron transport chain which drives oxidative phosphorylation. The CIV complex is the component of the respiratory chain that catalyzes the reduction of oxygen to water. Acts as an assembly factor that specifically drives the homodimerization of CIV complexes, mediating the formation of mitochondrial respiratory supercomplexes (respirasomes) containing two CIV: supercomplxes with two molecules of CIV show improved activity. Despite being highly expressed in brown adipose tissue, not required for thermogenesis. The polypeptide is Cytochrome c oxidase subunit 7A1, mitochondrial (Mus musculus (Mouse)).